Here is a 212-residue protein sequence, read N- to C-terminus: Uridine kinase (212 aa).

13 to 20 (GGSGSGKT) contacts ATP.

The protein belongs to the uridine kinase family.

The protein localises to the cytoplasm. The catalysed reaction is uridine + ATP = UMP + ADP + H(+). The enzyme catalyses cytidine + ATP = CMP + ADP + H(+). It functions in the pathway pyrimidine metabolism; CTP biosynthesis via salvage pathway; CTP from cytidine: step 1/3. Its pathway is pyrimidine metabolism; UMP biosynthesis via salvage pathway; UMP from uridine: step 1/1. This is Uridine kinase from Bacillus thuringiensis (strain Al Hakam).